The primary structure comprises 495 residues: MKPHLKQWRQGMLCGVFAWGLFFVVIFLYFTDSSPAKPAPSSFSFLETRRLLPAQGRQRAIMGASEGLPEGADLRRGSPRGLPSGPLRTWAGDGFEREQEFLSVQTGRTSLSSFAPEDSAPGTSGRLFPGDPGPEGARPPRAAPGRRAKRGPRRQSLSARGEDGERLYSSMSRALLRRLWKGDASARMLHPRLQKAMGAYLRANKHGVRFRGRRASGRSRTELLCALRGRVQVRTLDGTEPPFSALGWRALVPPVPLSRLLPRRLRTCAVVTSAGAILNSSLGEEIDSHDAVLRFNSAPTRGYEKDVGNKTTVRIINSQILTNPSYHFMDSALYKDVILVAWDPAPYSANLNLWYKKPDYNLFTPYVQHRQRNPNQPFYILHPKFIWQLWDIIQENTKEKIQPNPPSSGFIGILLMMNLCGEVHVYEYVPSVRQTDLCHYHEPYHDAACTLGAYHPLLYEKLLVQRLNVGTHGDLHRKGKVVLPGLQAVRCPPGA.

Residues 1–10 (MKPHLKQWRQ) are Cytoplasmic-facing. Residues 11–31 (GMLCGVFAWGLFFVVIFLYFT) form a helical; Signal-anchor for type II membrane protein membrane-spanning segment. The Lumenal portion of the chain corresponds to 32-495 (DSSPAKPAPS…LQAVRCPPGA (464 aa)). Disordered stretches follow at residues 63–90 (GASEGLPEGADLRRGSPRGLPSGPLRTW) and 107–165 (GRTS…EDGE). The segment covering 134-143 (PEGARPPRAA) has biased composition (low complexity). The span at 144 to 153 (PGRRAKRGPR) shows a compositional bias: basic residues. Disulfide bonds link Cys225/Cys491, Cys268/Cys420, and Cys438/Cys449. N-linked (GlcNAc...) asparagine glycans are attached at residues Asn279 and Asn309.

It belongs to the glycosyltransferase 29 family.

The protein resides in the golgi apparatus. It localises to the golgi stack membrane. It carries out the reaction a beta-D-galactoside + CMP-N-acetyl-beta-neuraminate = an N-acetyl-alpha-neuraminyl-(2-&gt;6)-beta-D-galactosyl derivative + CMP + H(+). Transfers sialic acid from the donor of substrate CMP-sialic acid to galactose containing acceptor substrates. Has alpha-2,6-sialyltransferase activity toward oligosaccharides that have the Gal-beta-1,4-GlcNAc sequence at the non-reducing end of their carbohydrate groups, but it has weak or no activities toward glycoproteins and glycolipids. In Bos taurus (Bovine), this protein is Beta-galactoside alpha-2,6-sialyltransferase 2 (ST6GAL2).